Reading from the N-terminus, the 446-residue chain is Argininosuccinate lyase (446 aa).

This sequence belongs to the lyase 1 family. Argininosuccinate lyase subfamily.

It localises to the cytoplasm. The catalysed reaction is 2-(N(omega)-L-arginino)succinate = fumarate + L-arginine. It functions in the pathway amino-acid biosynthesis; L-arginine biosynthesis; L-arginine from L-ornithine and carbamoyl phosphate: step 3/3. In Sulfurisphaera tokodaii (strain DSM 16993 / JCM 10545 / NBRC 100140 / 7) (Sulfolobus tokodaii), this protein is Argininosuccinate lyase.